Here is a 148-residue protein sequence, read N- to C-terminus: D-aminoacyl-tRNA deacylase (148 aa).

The Gly-cisPro motif, important for rejection of L-amino acids motif lies at 136–137 (GP).

This sequence belongs to the DTD family. Homodimer.

The protein localises to the cytoplasm. The enzyme catalyses glycyl-tRNA(Ala) + H2O = tRNA(Ala) + glycine + H(+). It catalyses the reaction a D-aminoacyl-tRNA + H2O = a tRNA + a D-alpha-amino acid + H(+). An aminoacyl-tRNA editing enzyme that deacylates mischarged D-aminoacyl-tRNAs. Also deacylates mischarged glycyl-tRNA(Ala), protecting cells against glycine mischarging by AlaRS. Acts via tRNA-based rather than protein-based catalysis; rejects L-amino acids rather than detecting D-amino acids in the active site. By recycling D-aminoacyl-tRNA to D-amino acids and free tRNA molecules, this enzyme counteracts the toxicity associated with the formation of D-aminoacyl-tRNA entities in vivo and helps enforce protein L-homochirality. In Streptococcus mutans serotype c (strain ATCC 700610 / UA159), this protein is D-aminoacyl-tRNA deacylase.